Consider the following 612-residue polypeptide: Dihydroxy-acid dehydratase (612 aa).

A Mg(2+)-binding site is contributed by Asp81. A [2Fe-2S] cluster-binding site is contributed by Cys122. Residues Asp123 and Lys124 each contribute to the Mg(2+) site. N6-carboxylysine is present on Lys124. A [2Fe-2S] cluster-binding site is contributed by Cys195. A Mg(2+)-binding site is contributed by Glu491. Ser517 functions as the Proton acceptor in the catalytic mechanism.

The protein belongs to the IlvD/Edd family. Homodimer. The cofactor is [2Fe-2S] cluster. Requires Mg(2+) as cofactor.

It carries out the reaction (2R)-2,3-dihydroxy-3-methylbutanoate = 3-methyl-2-oxobutanoate + H2O. The catalysed reaction is (2R,3R)-2,3-dihydroxy-3-methylpentanoate = (S)-3-methyl-2-oxopentanoate + H2O. It functions in the pathway amino-acid biosynthesis; L-isoleucine biosynthesis; L-isoleucine from 2-oxobutanoate: step 3/4. It participates in amino-acid biosynthesis; L-valine biosynthesis; L-valine from pyruvate: step 3/4. Functions in the biosynthesis of branched-chain amino acids. Catalyzes the dehydration of (2R,3R)-2,3-dihydroxy-3-methylpentanoate (2,3-dihydroxy-3-methylvalerate) into 2-oxo-3-methylpentanoate (2-oxo-3-methylvalerate) and of (2R)-2,3-dihydroxy-3-methylbutanoate (2,3-dihydroxyisovalerate) into 2-oxo-3-methylbutanoate (2-oxoisovalerate), the penultimate precursor to L-isoleucine and L-valine, respectively. This chain is Dihydroxy-acid dehydratase, found in Rhizobium leguminosarum bv. trifolii (strain WSM2304).